A 346-amino-acid chain; its full sequence is Short-wave-sensitive opsin 1 (346 aa).

Topologically, residues 1-31 (MSGEDEFYLFQNISSVGPWDGPQYHIAPVWA) are extracellular. N12 carries an N-linked (GlcNAc...) asparagine glycan. The helical transmembrane segment at 32 to 56 (FHLQAAFMGFVFFAGTPLNATVLVA) threads the bilayer. The Cytoplasmic segment spans residues 57-68 (TLHYKKLRQPLN). A helical transmembrane segment spans residues 69–94 (YILVNVSLGGFLFCIFSVFTVFIASC). The Extracellular segment spans residues 95–108 (HGYFLFGRHVCALE). An intrachain disulfide couples C105 to C182. The helical transmembrane segment at 109 to 128 (AFLGSVAGLVTGWSLAFLAF) threads the bilayer. Topologically, residues 129–147 (ERYLVICKPFGNIRFNSKH) are cytoplasmic. A helical membrane pass occupies residues 148-171 (ALTVVLITWTIGIGVSIPPFFGWS). Residues 172 to 197 (RFIPEGLQCSCGPDWYTVGTKYRSEH) are Extracellular-facing. The chain crosses the membrane as a helical span at residues 198–225 (YTWFLFIFCFIIPLSLICFSYFQLLRTL). Over 226–247 (RAVAAQQQESATTQKAEREVSH) the chain is Cytoplasmic. Residues 248 to 271 (MVVVMVGSFCLCYVPYAALAMYMV) traverse the membrane as a helical segment. At 272–279 (NNRNHGLY) the chain is on the extracellular side. The helical transmembrane segment at 280–304 (LRLVTIPAFFSKSSCVYNPIIYCFM) threads the bilayer. At K291 the chain carries N6-(retinylidene)lysine. Residues 305-346 (NKQFRACILEMVCRKPMTDESDMSGSQKTEVSTVSSSKVGPH) are Cytoplasmic-facing. Residues 322-346 (TDESDMSGSQKTEVSTVSSSKVGPH) are disordered. Positions 330–346 (SQKTEVSTVSSSKVGPH) are enriched in low complexity.

It belongs to the G-protein coupled receptor 1 family. Opsin subfamily. In terms of processing, phosphorylated on some or all of the serine and threonine residues present in the C-terminal region. As to expression, expressed in cone photoreceptor cells.

It is found in the cell membrane. It localises to the photoreceptor inner segment. The protein resides in the cell projection. The protein localises to the cilium. Its subcellular location is the photoreceptor outer segment. It is found in the cytoplasm. It localises to the perinuclear region. In terms of biological role, visual pigments are the light-absorbing molecules that mediate vision. They consist of an apoprotein, opsin, covalently linked to cis-retinal. Required for the maintenance of cone outer segment organization in the ventral retina, but not essential for the maintenance of functioning cone photoreceptors. Involved in ensuring correct abundance and localization of retinal membrane proteins. May increase spectral sensitivity in dim light. The protein is Short-wave-sensitive opsin 1 (Opn1sw) of Rattus norvegicus (Rat).